A 178-amino-acid chain; its full sequence is Ribosome maturation factor RimM (178 aa).

Positions 93-170 (EGSYYYHELR…ALTADAPAGL (78 aa)) constitute a PRC barrel domain.

It belongs to the RimM family. Binds ribosomal protein uS19.

It localises to the cytoplasm. Functionally, an accessory protein needed during the final step in the assembly of 30S ribosomal subunit, possibly for assembly of the head region. Essential for efficient processing of 16S rRNA. May be needed both before and after RbfA during the maturation of 16S rRNA. It has affinity for free ribosomal 30S subunits but not for 70S ribosomes. The chain is Ribosome maturation factor RimM from Deinococcus geothermalis (strain DSM 11300 / CIP 105573 / AG-3a).